Reading from the N-terminus, the 64-residue chain is Kappa-lycotoxin-Os1a (64 aa).

Disulfide bonds link Cys-10–Cys-26, Cys-17–Cys-56, Cys-19–Cys-42, and Cys-28–Cys-40.

The protein belongs to the neurotoxin 04 (omega-agtx) family. 01 (type I omega-agtx) subfamily. In terms of tissue distribution, expressed by the venom gland.

Its subcellular location is the secreted. Functionally, insecticidal to house crickets. It induces an excitatory slow-onset impact that leads to irreversible spastic paralysis. It also modifies human voltage-gated potassium channel Kv1.5/KCNA5. Most likely, it binds to the voltage-sensing domain of the channel, suggesting it does not block the pore but prevents its opening at physiological membrane potentials. The recombinant peptide binds to the channel in an irreversible manner and slows down the hKv1.5 current activation kinetics. It is not toxic to mice, when intracranially injected (at 0.5 ug/g mouse). This chain is Kappa-lycotoxin-Os1a, found in Oculicosa supermirabilis (Central Asian wolf-spider).